The sequence spans 200 residues: Phospholipase A2 inhibitor LNF2 (200 aa).

The N-terminal stretch at 1–19 is a signal peptide; the sequence is MKSLHTICLLFIFVARGNS. 8 disulfides stabilise this stretch: cysteine 22–cysteine 46, cysteine 25–cysteine 32, cysteine 39–cysteine 67, cysteine 73–cysteine 94, cysteine 95–cysteine 100, cysteine 118–cysteine 143, cysteine 136–cysteine 165, and cysteine 169–cysteine 191. A glycan (N-linked (GlcNAc...) asparagine) is linked at asparagine 176.

Belongs to the CNF-like-inhibitor family. In terms of assembly, occurs as a mixture of oligomers. Tetrameric arrangement appears to be the predominant quaternary structure. As to expression, expressed by the liver.

Its subcellular location is the secreted. Functionally, inhibits the enzymatic activity of phospholipase A2 (PA2). The sequence is that of Phospholipase A2 inhibitor LNF2 from Lachesis muta muta (Bushmaster).